Consider the following 337-residue polypeptide: Phosphate acyltransferase (337 aa).

This sequence belongs to the PlsX family. As to quaternary structure, homodimer. Probably interacts with PlsY.

The protein localises to the cytoplasm. It carries out the reaction a fatty acyl-[ACP] + phosphate = an acyl phosphate + holo-[ACP]. It participates in lipid metabolism; phospholipid metabolism. Its function is as follows. Catalyzes the reversible formation of acyl-phosphate (acyl-PO(4)) from acyl-[acyl-carrier-protein] (acyl-ACP). This enzyme utilizes acyl-ACP as fatty acyl donor, but not acyl-CoA. This chain is Phosphate acyltransferase, found in Aquifex aeolicus (strain VF5).